A 536-amino-acid polypeptide reads, in one-letter code: Light-independent protochlorophyllide reductase subunit B (536 aa).

Residue aspartate 36 coordinates [4Fe-4S] cluster. Aspartate 274 functions as the Proton donor in the catalytic mechanism. Glycine 409–leucine 410 contributes to the substrate binding site. Residues aspartate 426–alanine 448 form a disordered region.

This sequence belongs to the ChlB/BchB/BchZ family. As to quaternary structure, protochlorophyllide reductase is composed of three subunits; BchL, BchN and BchB. Forms a heterotetramer of two BchB and two BchN subunits. Requires [4Fe-4S] cluster as cofactor.

It catalyses the reaction chlorophyllide a + oxidized 2[4Fe-4S]-[ferredoxin] + 2 ADP + 2 phosphate = protochlorophyllide a + reduced 2[4Fe-4S]-[ferredoxin] + 2 ATP + 2 H2O. It participates in porphyrin-containing compound metabolism; bacteriochlorophyll biosynthesis (light-independent). In terms of biological role, component of the dark-operative protochlorophyllide reductase (DPOR) that uses Mg-ATP and reduced ferredoxin to reduce ring D of protochlorophyllide (Pchlide) to form chlorophyllide a (Chlide). This reaction is light-independent. The NB-protein (BchN-BchB) is the catalytic component of the complex. In Cereibacter sphaeroides (strain KD131 / KCTC 12085) (Rhodobacter sphaeroides), this protein is Light-independent protochlorophyllide reductase subunit B.